The chain runs to 763 residues: Probable portal protein (763 aa).

Basic and acidic residues predominate over residues 668 to 679 (GTKHARDLEKMK). Disordered regions lie at residues 668–706 (GTKH…LPPN) and 729–763 (ERDI…RLGN). Residues 680–689 (AQSQGNQQLE) show a composition bias toward polar residues.

Homododecamer.

The protein localises to the virion. Forms the portal vertex of the capsid. This portal plays critical roles in head assembly, genome packaging, neck/tail attachment, and genome ejection. The portal protein multimerizes as a single ring-shaped homododecamer arranged around a central channel. The sequence is that of Probable portal protein (59) from Escherichia coli (Bacteriophage N4).